Consider the following 164-residue polypeptide: Cell division protein SepF (164 aa).

The segment at 21-71 (YQQGQQPAQQQQSPVQAVPTPVPAPQQQAKRAPVTPLHKPSTTTRNAAPAE) is disordered. Low complexity predominate over residues 22 to 49 (QQGQQPAQQQQSPVQAVPTPVPAPQQQA).

Belongs to the SepF family. Homodimer. Interacts with FtsZ.

The protein resides in the cytoplasm. Its function is as follows. Cell division protein that is part of the divisome complex and is recruited early to the Z-ring. Probably stimulates Z-ring formation, perhaps through the cross-linking of FtsZ protofilaments. Its function overlaps with FtsA. The chain is Cell division protein SepF from Clavibacter sepedonicus (Clavibacter michiganensis subsp. sepedonicus).